A 107-amino-acid chain; its full sequence is Nucleoid-associated protein PPA0205 (107 aa).

This sequence belongs to the YbaB/EbfC family. As to quaternary structure, homodimer.

It is found in the cytoplasm. The protein localises to the nucleoid. Its function is as follows. Binds to DNA and alters its conformation. May be involved in regulation of gene expression, nucleoid organization and DNA protection. This chain is Nucleoid-associated protein PPA0205, found in Cutibacterium acnes (strain DSM 16379 / KPA171202) (Propionibacterium acnes).